The chain runs to 413 residues: Putative competence-damage inducible protein (413 aa).

It belongs to the CinA family.

This Pediococcus pentosaceus (strain ATCC 25745 / CCUG 21536 / LMG 10740 / 183-1w) protein is Putative competence-damage inducible protein.